Consider the following 96-residue polypeptide: Protein Vpr (96 aa).

Positions 1–42 (MEQAPEDQGPQREPYNEWTIEILEELKREAVRHFPRPWLHDL) are homooligomerization. Phosphoserine; by host occurs at positions 79, 94, and 96.

It belongs to the HIV-1 VPR protein family. As to quaternary structure, homooligomer, may form homodimer. Interacts with p6-gag region of the Pr55 Gag precursor protein through a (Leu-X-X)4 motif near the C-terminus of the P6gag protein. Interacts with host UNG. May interact with host RAD23A/HHR23A. Interacts with host VPRBP/DCAF1, leading to hijack the CUL4A-RBX1-DDB1-DCAF1/VPRBP complex, mediating ubiquitination of host proteins such as TERT and ZGPAT and arrest of the cell cycle in G2 phase. In terms of processing, phosphorylated on several residues by host. These phosphorylations regulate VPR activity for the nuclear import of the HIV-1 pre-integration complex.

The protein localises to the virion. Its subcellular location is the host nucleus. It is found in the host extracellular space. Functionally, during virus replication, may deplete host UNG protein, and incude G2-M cell cycle arrest. Acts by targeting specific host proteins for degradation by the 26S proteasome, through association with the cellular CUL4A-DDB1 E3 ligase complex by direct interaction with host VPRPB/DCAF-1. Cell cycle arrest reportedly occurs within hours of infection and is not blocked by antiviral agents, suggesting that it is initiated by the VPR carried into the virion. Additionally, VPR induces apoptosis in a cell cycle dependent manner suggesting that these two effects are mechanistically linked. Detected in the serum and cerebrospinal fluid of AIDS patient, VPR may also induce cell death to bystander cells. Its function is as follows. During virus entry, plays a role in the transport of the viral pre-integration (PIC) complex to the host nucleus. This function is crucial for viral infection of non-dividing macrophages. May act directly at the nuclear pore complex, by binding nucleoporins phenylalanine-glycine (FG)-repeat regions. The chain is Protein Vpr from Human immunodeficiency virus type 1 group M subtype K (isolate 97ZR-EQTB11) (HIV-1).